A 158-amino-acid chain; its full sequence is Glycine/sarcosine/betaine reductase complex component A (158 aa).

U44 is a catalytic residue. Residue U44 is a non-standard amino acid, selenocysteine.

This sequence belongs to the GrdA family. As to quaternary structure, monomer. Component of the glycine, sarcosine and betaine reductase complexes, together with components B and C.

It catalyses the reaction acetyl phosphate + [thioredoxin]-disulfide + NH4(+) + H2O = [thioredoxin]-dithiol + glycine + phosphate + H(+). The catalysed reaction is acetyl phosphate + methylamine + [thioredoxin]-disulfide + H2O = sarcosine + [thioredoxin]-dithiol + phosphate + H(+). It carries out the reaction acetyl phosphate + trimethylamine + [thioredoxin]-disulfide + H2O = glycine betaine + [thioredoxin]-dithiol + phosphate + H(+). Functionally, in the first step of glycine, betaine and sarcosine reductases, the substrate is bound to component PB via a Schiff base intermediate. Then the PB-activated substrate is nucleophilically attacked by the selenol anion of component PA to transform it to a carboxymethylated selenoether and the respective amine. By action of component PC, acetyl phosphate is formed, leaving component PA in its oxidized state. Finally component PA becomes reduced by the thioredoxin system to start a new catalytic cycle of reductive deamination. This Alkaliphilus metalliredigens (strain QYMF) protein is Glycine/sarcosine/betaine reductase complex component A.